A 340-amino-acid chain; its full sequence is Anthranilate phosphoribosyltransferase (340 aa).

5-phospho-alpha-D-ribose 1-diphosphate is bound by residues glycine 82, glycine 85 to aspartate 86, threonine 90, asparagine 92 to serine 95, lysine 110 to serine 118, and alanine 122. Glycine 82 provides a ligand contact to anthranilate. Serine 94 contacts Mg(2+). Arginine 168 serves as a coordination point for anthranilate. Residues aspartate 227 and glutamate 228 each coordinate Mg(2+).

It belongs to the anthranilate phosphoribosyltransferase family. In terms of assembly, homodimer. The cofactor is Mg(2+).

It catalyses the reaction N-(5-phospho-beta-D-ribosyl)anthranilate + diphosphate = 5-phospho-alpha-D-ribose 1-diphosphate + anthranilate. Its pathway is amino-acid biosynthesis; L-tryptophan biosynthesis; L-tryptophan from chorismate: step 2/5. Catalyzes the transfer of the phosphoribosyl group of 5-phosphorylribose-1-pyrophosphate (PRPP) to anthranilate to yield N-(5'-phosphoribosyl)-anthranilate (PRA). The polypeptide is Anthranilate phosphoribosyltransferase (Dechloromonas aromatica (strain RCB)).